Consider the following 494-residue polypeptide: Cysteine--tRNA ligase (494 aa).

Position 29 (Cys-29) interacts with Zn(2+). The short motif at 31–41 is the 'HIGH' region element; the sequence is VTVYDHCHIGH. The Zn(2+) site is built by Cys-209, His-234, and Glu-238. The 'KMSKS' region signature appears at 266 to 270; it reads KMSKS. Lys-269 contacts ATP.

The protein belongs to the class-I aminoacyl-tRNA synthetase family. Monomer. Requires Zn(2+) as cofactor.

It is found in the cytoplasm. The catalysed reaction is tRNA(Cys) + L-cysteine + ATP = L-cysteinyl-tRNA(Cys) + AMP + diphosphate. The protein is Cysteine--tRNA ligase of Geotalea daltonii (strain DSM 22248 / JCM 15807 / FRC-32) (Geobacter daltonii).